The sequence spans 381 residues: Spermidine/putrescine import ATP-binding protein PotA (381 aa).

Residues 19-249 (VELRKVFKVF…PESPFVADFI (231 aa)) enclose the ABC transporter domain. Residue 51–58 (GPSGCGKT) coordinates ATP.

It belongs to the ABC transporter superfamily. Spermidine/putrescine importer (TC 3.A.1.11.1) family. As to quaternary structure, the complex is composed of two ATP-binding proteins (PotA), two transmembrane proteins (PotB and PotC) and a solute-binding protein (PotD).

The protein resides in the cell inner membrane. It carries out the reaction ATP + H2O + polyamine-[polyamine-binding protein]Side 1 = ADP + phosphate + polyamineSide 2 + [polyamine-binding protein]Side 1.. Functionally, part of the ABC transporter complex PotABCD involved in spermidine/putrescine import. Responsible for energy coupling to the transport system. This is Spermidine/putrescine import ATP-binding protein PotA from Trichodesmium erythraeum (strain IMS101).